Consider the following 202-residue polypeptide: MLPPGTATLLTLLLAAGSLGQKPQRPRRPASPISTIQPKANFDAQQFAGTWLLVAVGSACRFLQEQGHRAEATTLHVAPQGTAMAVSTFRKLDGICWQVRQLYGDTGVLGRFLLQARDARGAVHVVVAETDYQSFAVLYLERAGQLSVKLYARSLPVSDSVLSGFEQRVQEAHLTEDQIFYFPKYGFCEAADQFHVLDEVRR.

Positions 1-20 are cleaved as a signal peptide; sequence MLPPGTATLLTLLLAAGSLG. At glutamine 21 the chain carries Pyrrolidone carboxylic acid. An intrachain disulfide couples cysteine 96 to cysteine 188.

It belongs to the calycin superfamily. Lipocalin family. As to quaternary structure, heterotrimer of 3 chains: alpha (C8A), beta (C8B) and gamma (C8G); the alpha and gamma chains are disulfide bonded. Component of the membrane attack complex (MAC), composed of complement C5b, C6, C7, C8A, C8B, C8G and multiple copies of the pore-forming subunit C9.

It localises to the secreted. The protein resides in the target cell membrane. Membrane attack complex (MAC) assembly is inhibited by CD59, thereby protecting self-cells from damage during complement activation. MAC assembly is also inhibited by clusterin (CLU) chaperones that inhibit polymerization of C9. In terms of biological role, component of the membrane attack complex (MAC), a multiprotein complex activated by the complement cascade, which inserts into a target cell membrane and forms a pore, leading to target cell membrane rupture and cell lysis. The MAC is initiated by proteolytic cleavage of C5 into complement C5b in response to the classical, alternative, lectin and GZMK complement pathways. The complement pathways consist in a cascade of proteins that leads to phagocytosis and breakdown of pathogens and signaling that strengthens the adaptive immune system. C8G, together with C8A and C8B, inserts into the target membrane, but does not form pores by itself. During MAC assembly, associates with C5b, C6 and C7 to form the C5b8 intermediate complex that inserts into the target membrane and traverses the bilayer increasing membrane rigidity. This Homo sapiens (Human) protein is Complement component C8 gamma chain.